The chain runs to 502 residues: Membrane-bound lytic murein transglycosylase F (502 aa).

Positions 1 to 33 (MSRFISTFRSSSAQLSIVLAVILATGCSQPTTL) are cleaved as a signal peptide. The non-LT domain stretch occupies residues 34–264 (QEIREEGVLH…QLAERFYGHL (231 aa)). An LT domain region spans residues 265-502 (DRLNYVGART…PELRLIPPTL (238 aa)). Glu-311 is an active-site residue. The segment at 457–502 (PSASGLEDQLAWLGDNEAGPEAPAKESQPDLRADLPPELRLIPPTL) is disordered. Residues 479-493 (PAKESQPDLRADLPP) show a composition bias toward basic and acidic residues.

In the N-terminal section; belongs to the bacterial solute-binding protein 3 family. This sequence in the C-terminal section; belongs to the transglycosylase Slt family.

The protein localises to the cell outer membrane. The enzyme catalyses Exolytic cleavage of the (1-&gt;4)-beta-glycosidic linkage between N-acetylmuramic acid (MurNAc) and N-acetylglucosamine (GlcNAc) residues in peptidoglycan, from either the reducing or the non-reducing ends of the peptidoglycan chains, with concomitant formation of a 1,6-anhydrobond in the MurNAc residue.. In terms of biological role, murein-degrading enzyme that degrades murein glycan strands and insoluble, high-molecular weight murein sacculi, with the concomitant formation of a 1,6-anhydromuramoyl product. Lytic transglycosylases (LTs) play an integral role in the metabolism of the peptidoglycan (PG) sacculus. Their lytic action creates space within the PG sacculus to allow for its expansion as well as for the insertion of various structures such as secretion systems and flagella. The polypeptide is Membrane-bound lytic murein transglycosylase F (Marinobacter nauticus (strain ATCC 700491 / DSM 11845 / VT8) (Marinobacter aquaeolei)).